Consider the following 72-residue polypeptide: UPF0352 protein swp_2271 (72 aa).

Belongs to the UPF0352 family.

The sequence is that of UPF0352 protein swp_2271 from Shewanella piezotolerans (strain WP3 / JCM 13877).